The following is a 101-amino-acid chain: MAKLSIKQRELKREQLVAKFAKKYAELKAIINDAGKSDEERYTARLALQKLPRNAYPSRLRNRCELTGRPRGTFRTFGLARNKIRELAFKGDIPGVVKASW.

It belongs to the universal ribosomal protein uS14 family. As to quaternary structure, part of the 30S ribosomal subunit. Contacts proteins S3 and S10.

Its function is as follows. Binds 16S rRNA, required for the assembly of 30S particles and may also be responsible for determining the conformation of the 16S rRNA at the A site. This Methylibium petroleiphilum (strain ATCC BAA-1232 / LMG 22953 / PM1) protein is Small ribosomal subunit protein uS14.